The primary structure comprises 57 residues: Large ribosomal subunit protein bL32c (57 aa).

Belongs to the bacterial ribosomal protein bL32 family.

The protein resides in the plastid. The protein localises to the chloroplast. The sequence is that of Large ribosomal subunit protein bL32c from Acorus calamus (Sweet flag).